The following is a 245-amino-acid chain: OVARIAN TUMOR DOMAIN-containing deubiquitinating enzyme 11 (245 aa).

A disordered region spans residues 1 to 37 (MDENHRNPFANASTSARASGSTSASSNSSFSSSVADT). A compositionally biased stretch (low complexity) spans 10-35 (ANASTSARASGSTSASSNSSFSSSVA). Residues 101–225 (LAELQMEGDG…EVHYNSLYAN (125 aa)) form the OTU domain. Asp109 is a catalytic residue. The Nucleophile role is filled by Cys112. The active site involves His218.

Belongs to the peptidase C85 family.

The enzyme catalyses Thiol-dependent hydrolysis of ester, thioester, amide, peptide and isopeptide bonds formed by the C-terminal Gly of ubiquitin (a 76-residue protein attached to proteins as an intracellular targeting signal).. Functionally, hydrolase that can remove conjugated ubiquitin from proteins in vitro and may therefore play an important regulatory role at the level of protein turnover by preventing degradation. Inactive cysteine protease. In Arabidopsis thaliana (Mouse-ear cress), this protein is OVARIAN TUMOR DOMAIN-containing deubiquitinating enzyme 11.